A 186-amino-acid polypeptide reads, in one-letter code: Bilin biosynthesis protein CpeZ (186 aa).

Its function is as follows. Involved in the biosynthesis of bilin. This Synechococcus sp. (strain WH8020) protein is Bilin biosynthesis protein CpeZ (cpeZ).